A 704-amino-acid chain; its full sequence is Polyribonucleotide nucleotidyltransferase (704 aa).

Mg(2+) contacts are provided by D488 and D494. Residues 555 to 614 (PRITTIKINPEKIRDVIGKGGATIRALTEETGTTIELDDDGTVKIASSNGEATKEAIRRI) form the KH domain. The S1 motif domain occupies 624-692 (GTVYNGKVVR…RQGRVRLSMK (69 aa)).

This sequence belongs to the polyribonucleotide nucleotidyltransferase family. Component of the RNA degradosome, which is a multiprotein complex involved in RNA processing and mRNA degradation. The cofactor is Mg(2+).

It is found in the cytoplasm. The catalysed reaction is RNA(n+1) + phosphate = RNA(n) + a ribonucleoside 5'-diphosphate. Its function is as follows. Involved in mRNA degradation. Catalyzes the phosphorolysis of single-stranded polyribonucleotides processively in the 3'- to 5'-direction. The protein is Polyribonucleotide nucleotidyltransferase of Shewanella halifaxensis (strain HAW-EB4).